The primary structure comprises 375 residues: Anhydro-N-acetylmuramic acid kinase (375 aa).

Residue 18–25 (GTSMDGID) coordinates ATP.

This sequence belongs to the anhydro-N-acetylmuramic acid kinase family.

It catalyses the reaction 1,6-anhydro-N-acetyl-beta-muramate + ATP + H2O = N-acetyl-D-muramate 6-phosphate + ADP + H(+). Its pathway is amino-sugar metabolism; 1,6-anhydro-N-acetylmuramate degradation. It participates in cell wall biogenesis; peptidoglycan recycling. Its function is as follows. Catalyzes the specific phosphorylation of 1,6-anhydro-N-acetylmuramic acid (anhMurNAc) with the simultaneous cleavage of the 1,6-anhydro ring, generating MurNAc-6-P. Is required for the utilization of anhMurNAc either imported from the medium or derived from its own cell wall murein, and thus plays a role in cell wall recycling. The protein is Anhydro-N-acetylmuramic acid kinase of Rhodospirillum rubrum (strain ATCC 11170 / ATH 1.1.1 / DSM 467 / LMG 4362 / NCIMB 8255 / S1).